Here is a 200-residue protein sequence, read N- to C-terminus: 7-methyl-GTP pyrophosphatase (200 aa).

The Proton acceptor role is filled by Asp75.

This sequence belongs to the Maf family. YceF subfamily. It depends on a divalent metal cation as a cofactor.

It localises to the cytoplasm. The catalysed reaction is N(7)-methyl-GTP + H2O = N(7)-methyl-GMP + diphosphate + H(+). Its function is as follows. Nucleoside triphosphate pyrophosphatase that hydrolyzes 7-methyl-GTP (m(7)GTP). May have a dual role in cell division arrest and in preventing the incorporation of modified nucleotides into cellular nucleic acids. This is 7-methyl-GTP pyrophosphatase from Hydrogenovibrio crunogenus (strain DSM 25203 / XCL-2) (Thiomicrospira crunogena).